A 677-amino-acid polypeptide reads, in one-letter code: DNA-directed RNA polymerase subunit beta' (677 aa).

C69, C71, C87, and C90 together coordinate Zn(2+). Residues D489, D491, and D493 each coordinate Mg(2+).

It belongs to the RNA polymerase beta' chain family. RpoC1 subfamily. As to quaternary structure, in plastids the minimal PEP RNA polymerase catalytic core is composed of four subunits: alpha, beta, beta', and beta''. When a (nuclear-encoded) sigma factor is associated with the core the holoenzyme is formed, which can initiate transcription. Requires Mg(2+) as cofactor. Zn(2+) is required as a cofactor.

The protein resides in the plastid. It localises to the chloroplast. It catalyses the reaction RNA(n) + a ribonucleoside 5'-triphosphate = RNA(n+1) + diphosphate. DNA-dependent RNA polymerase catalyzes the transcription of DNA into RNA using the four ribonucleoside triphosphates as substrates. This is DNA-directed RNA polymerase subunit beta' from Spinacia oleracea (Spinach).